Consider the following 164-residue polypeptide: B-phycoerythrin alpha chain (164 aa).

2 residues coordinate (2R,3E)-phycoerythrobilin: Cys-82 and Cys-139.

It belongs to the phycobiliprotein family. As to quaternary structure, heteromer of 6 alpha, 6 beta and one gamma chain. Contains two covalently linked bilin chromophores.

The protein localises to the plastid. It localises to the chloroplast thylakoid membrane. Light-harvesting photosynthetic bile pigment-protein from the phycobiliprotein complex. The protein is B-phycoerythrin alpha chain (cpeA) of Rhodella violacea (Red alga).